Here is a 436-residue protein sequence, read N- to C-terminus: Adenosylhomocysteinase (436 aa).

Substrate is bound by residues threonine 62, aspartate 136, and glutamate 161. Position 162–164 (162–164 (TTT)) interacts with NAD(+). Positions 191 and 195 each coordinate substrate. Residues asparagine 196, 225-230 (GFGDVG), glutamate 248, asparagine 283, 304-306 (IGH), and asparagine 352 each bind NAD(+).

Belongs to the adenosylhomocysteinase family. NAD(+) serves as cofactor.

Its subcellular location is the cytoplasm. It catalyses the reaction S-adenosyl-L-homocysteine + H2O = L-homocysteine + adenosine. It functions in the pathway amino-acid biosynthesis; L-homocysteine biosynthesis; L-homocysteine from S-adenosyl-L-homocysteine: step 1/1. Its function is as follows. May play a key role in the regulation of the intracellular concentration of adenosylhomocysteine. The sequence is that of Adenosylhomocysteinase from Leptospira borgpetersenii serovar Hardjo-bovis (strain JB197).